We begin with the raw amino-acid sequence, 352 residues long: Photosystem II protein D1 (352 aa).

T2 carries the N-acetylthreonine modification. The residue at position 2 (T2) is a Phosphothreonine. Helical transmembrane passes span 29–46 (YIGW…TATS), 118–133 (HFLL…EWEL), and 142–156 (WIAV…AATA). Residue H118 coordinates chlorophyll a. Residue Y126 coordinates pheophytin a. Residues D170 and E189 each coordinate [CaMn4O5] cluster. The helical transmembrane segment at 197 to 218 (FHMLGVAGVFGGSLFSAMHGSL) threads the bilayer. A chlorophyll a-binding site is contributed by H198. A quinone is bound by residues H215 and 264 to 265 (SF). Residue H215 participates in Fe cation binding. H272 lines the Fe cation pocket. A helical transmembrane segment spans residues 274–288 (FLAAWPVVGIWFTAL). Residues H332, E333, D342, and A344 each coordinate [CaMn4O5] cluster. Residues 345-352 (SVEAPVVG) constitute a propeptide that is removed on maturation.

The protein belongs to the reaction center PufL/M/PsbA/D family. PSII is composed of 1 copy each of membrane proteins PsbA, PsbB, PsbC, PsbD, PsbE, PsbF, PsbH, PsbI, PsbJ, PsbK, PsbL, PsbM, PsbT, PsbX, PsbY, PsbZ, Psb30/Ycf12, at least 3 peripheral proteins of the oxygen-evolving complex and a large number of cofactors. It forms dimeric complexes. The D1/D2 heterodimer binds P680, chlorophylls that are the primary electron donor of PSII, and subsequent electron acceptors. It shares a non-heme iron and each subunit binds pheophytin, quinone, additional chlorophylls, carotenoids and lipids. D1 provides most of the ligands for the Mn4-Ca-O5 cluster of the oxygen-evolving complex (OEC). There is also a Cl(-1) ion associated with D1 and D2, which is required for oxygen evolution. The PSII complex binds additional chlorophylls, carotenoids and specific lipids. is required as a cofactor. In terms of processing, tyr-161 forms a radical intermediate that is referred to as redox-active TyrZ, YZ or Y-Z. C-terminally processed by CTPA; processing is essential to allow assembly of the oxygen-evolving complex and thus photosynthetic growth.

It is found in the plastid. The protein localises to the chloroplast thylakoid membrane. It catalyses the reaction 2 a plastoquinone + 4 hnu + 2 H2O = 2 a plastoquinol + O2. Photosystem II (PSII) is a light-driven water:plastoquinone oxidoreductase that uses light energy to abstract electrons from H(2)O, generating O(2) and a proton gradient subsequently used for ATP formation. It consists of a core antenna complex that captures photons, and an electron transfer chain that converts photonic excitation into a charge separation. The D1/D2 (PsbA/PsbD) reaction center heterodimer binds P680, the primary electron donor of PSII as well as several subsequent electron acceptors. This chain is Photosystem II protein D1, found in Zygnema circumcarinatum (Green alga).